A 336-amino-acid chain; its full sequence is Glucokinase (336 aa).

Position 12–17 (12–17) interacts with ATP; that stretch reads ADIGGT.

The protein belongs to the bacterial glucokinase family.

The protein localises to the cytoplasm. The catalysed reaction is D-glucose + ATP = D-glucose 6-phosphate + ADP + H(+). In Helicobacter pylori (strain P12), this protein is Glucokinase.